Consider the following 776-residue polypeptide: Structure-specific endonuclease subunit SLX4 (776 aa).

The segment covering 201–217 (EEQMVSDDNSSTEDDTD) has biased composition (acidic residues). Disordered regions lie at residues 201–223 (EEQM…QNDG), 263–283 (KSLQ…PDQN), and 507–531 (PPLD…KPHS).

Belongs to the SLX4 family. As to quaternary structure, forms a heterodimer with SLX1. Post-translationally, phosphorylated in response to DNA damage.

It is found in the nucleus. In terms of biological role, regulatory subunit of the SLX1-SLX4 structure-specific endonuclease that resolves DNA secondary structures generated during DNA repair and recombination. Has endonuclease activity towards branched DNA substrates, introducing single-strand cuts in duplex DNA close to junctions with ss-DNA. This chain is Structure-specific endonuclease subunit SLX4, found in Candida albicans (strain SC5314 / ATCC MYA-2876) (Yeast).